A 367-amino-acid chain; its full sequence is C-C chemokine receptor type 9 (367 aa).

Residues 1 to 46 lie on the Extracellular side of the membrane; the sequence is MVPTEATSLILNPSDDYGYDGTPPMEYDTNLTDYFCEKSHVRQFAG. The N-linked (GlcNAc...) asparagine glycan is linked to asparagine 30. 2 cysteine pairs are disulfide-bonded: cysteine 36–cysteine 287 and cysteine 117–cysteine 196. A helical membrane pass occupies residues 47–72; sequence HFLPPLYWLVFIVGAVGNSLVILVYW. Residues 73-83 are Cytoplasmic-facing; it reads YCTRVKTMTDM. Residues 84 to 107 traverse the membrane as a helical segment; the sequence is FLLNLAIADLLFLTTLPFWAIAAA. Over 108 to 118 the chain is Extracellular; that stretch reads DQWKFQTFMCK. The chain crosses the membrane as a helical span at residues 119 to 148; that stretch reads VVNSMYKMNFYSCVLLIMCISVDRYIAIAQ. The Cytoplasmic portion of the chain corresponds to 149 to 157; the sequence is AMRAQMWRQ. The chain crosses the membrane as a helical span at residues 158–183; sequence KRLLYSKMVCFTIWVMAAALCLPELL. The Extracellular portion of the chain corresponds to 184 to 206; sequence YSQVKEEHGTAICTVVYSSNEST. The N-linked (GlcNAc...) asparagine glycan is linked to asparagine 203. A helical membrane pass occupies residues 207-241; the sequence is KLKSAVLTLKVTLGFFLPFVVMACCYAIIIHTLIR. Residues 242-246 are Cytoplasmic-facing; sequence AKKSS. The chain crosses the membrane as a helical span at residues 247-281; it reads KHKALKVTITVLTVFVLSQFPHNCVLLVQTIDAYA. Over 282-288 the chain is Extracellular; that stretch reads TFISSCA. Residues 289–319 traverse the membrane as a helical segment; that stretch reads LSIKIDICFQVTQTVAFFHSCLNPVLYVFVG. Residues 320–367 are Cytoplasmic-facing; the sequence is ERFRRDLVKTLKNLGCISQAQWVSFTRREGSLKLSSMLLETTSGALSF.

It belongs to the G-protein coupled receptor 1 family.

It localises to the cell membrane. In terms of biological role, receptor for chemokine SCYA25/TECK. Subsequently transduces a signal by increasing the intracellular calcium ions level. This chain is C-C chemokine receptor type 9 (CCR9), found in Ovis aries (Sheep).